A 149-amino-acid chain; its full sequence is Transcriptional repressor NrdR (149 aa).

A zinc finger lies at 3–34 (CPFCSHPETQVVETRVAEDGDFVRRRRQCGAC). Residues 49-139 (PNVVKKDGRR…VYRNFEDIDE (91 aa)) form the ATP-cone domain.

Belongs to the NrdR family. Zn(2+) is required as a cofactor.

In terms of biological role, negatively regulates transcription of bacterial ribonucleotide reductase nrd genes and operons by binding to NrdR-boxes. The polypeptide is Transcriptional repressor NrdR (Paracidovorax citrulli (strain AAC00-1) (Acidovorax citrulli)).